A 287-amino-acid chain; its full sequence is Eukaryotic translation initiation factor 3 subunit G (287 aa).

The disordered stretch occupies residues 163-207 (EEDLESKEKDTKLGPTVPGSGKYVAPGMRGDRPAVTGGAERRSEE). The RRM domain occupies 208-286 (NTCRVTNLPE…LVLKVEWTRF (79 aa)).

It belongs to the eIF-3 subunit G family. As to quaternary structure, component of the eukaryotic translation initiation factor 3 (eIF-3) complex.

It is found in the cytoplasm. Functionally, RNA-binding component of the eukaryotic translation initiation factor 3 (eIF-3) complex, which is involved in protein synthesis of a specialized repertoire of mRNAs and, together with other initiation factors, stimulates binding of mRNA and methionyl-tRNAi to the 40S ribosome. The eIF-3 complex specifically targets and initiates translation of a subset of mRNAs involved in cell proliferation. This subunit can bind 18S rRNA. This chain is Eukaryotic translation initiation factor 3 subunit G, found in Brugia malayi (Filarial nematode worm).